The following is a 154-amino-acid chain: Myoglobin (154 aa).

The 147-residue stretch at Met1 to Ala147 folds into the Globin domain. Residue His96 coordinates heme b.

Belongs to the globin family.

Its subcellular location is the cytoplasm. This chain is Myoglobin (GLBB), found in Nippostrongylus brasiliensis (Rat hookworm).